The following is a 212-amino-acid chain: GTP cyclohydrolase 1 (212 aa).

The Zn(2+) site is built by Cys-103, His-106, and Cys-174.

It belongs to the GTP cyclohydrolase I family. In terms of assembly, toroid-shaped homodecamer, composed of two pentamers of five dimers.

It carries out the reaction GTP + H2O = 7,8-dihydroneopterin 3'-triphosphate + formate + H(+). Its pathway is cofactor biosynthesis; 7,8-dihydroneopterin triphosphate biosynthesis; 7,8-dihydroneopterin triphosphate from GTP: step 1/1. In Caulobacter vibrioides (strain ATCC 19089 / CIP 103742 / CB 15) (Caulobacter crescentus), this protein is GTP cyclohydrolase 1.